Consider the following 531-residue polypeptide: Protein SHORT-ROOT (531 aa).

Over residues 14–39 (QQSDSIITNQSSLSRTSTTTTGSPQT) the composition is skewed to low complexity. 2 disordered regions span residues 14 to 40 (QQSD…PQTA) and 65 to 103 (SSSS…PSST). Over residues 81-93 (TYYSPFTTPTQYH) the composition is skewed to polar residues. Low complexity predominate over residues 94 to 103 (PATSSTPSST). One can recognise a GRAS domain in the interval 134–529 (FDFSANAKWA…QPVVWASAWR (396 aa)). A leucine repeat I (LRI) region spans residues 141 to 206 (KWADSVLLEA…GSGERCYRTM (66 aa)). The VHIID stretch occupies residues 225 to 290 (VLKFQEVSPW…DDTPHLRLTT (66 aa)). A VHIID motif is present at residues 256–260 (IHIVD). The leucine repeat II (LRII) stretch occupies residues 310 to 343 (EIGNRMEKFARLMGVPFKFNIIHHVGDLSEFDLN). Positions 353-449 (LAINCVGAMH…ERAAGRAIVD (97 aa)) are PFYRE. Residues 452 to 529 (ACEPSDSTER…QPVVWASAWR (78 aa)) are SAW.

Belongs to the GRAS family. In terms of assembly, interacts with SCR, SCL23, JKD and MGP. Interacts with SIEL. Association to endosomes and intercellular movement of SHR rely on the interaction with SIEL. In terms of tissue distribution, expressed in the stele and the quiescent center. Not detected in the ground tissue cell lineage. The SHR protein moves from the stele to a single layer of adjacent cells, where it enters the nucleus.

It localises to the cytoplasm. The protein localises to the nucleus. Its subcellular location is the early endosome. It is found in the late endosome. The protein resides in the recycling endosome. Its function is as follows. Transcription factor required for quiescent center cells specification and maintenance of surrounding stem cells, and for the asymmetric cell division involved in radial pattern formation in roots. Essential for both cell division and cell specification. Regulates the radial organization of the shoot axial organs and is required for normal shoot gravitropism. Directly controls the transcription of SCR, and when associated with SCR, of MGP, RLK, TRI, NUC and SCL3. In Arabidopsis thaliana (Mouse-ear cress), this protein is Protein SHORT-ROOT.